Consider the following 107-residue polypeptide: Thioredoxin (107 aa).

The 106-residue stretch at 2-107 (SVEAVVKQVD…GIRELIQANA (106 aa)) folds into the Thioredoxin domain. Catalysis depends on nucleophile residues cysteine 34 and cysteine 37. Cysteine 34 and cysteine 37 are joined by a disulfide.

It belongs to the thioredoxin family.

In terms of biological role, participates in various redox reactions through the reversible oxidation of its active center dithiol to a disulfide and catalyzes dithiol-disulfide exchange reactions. The chain is Thioredoxin (TRX) from Echinococcus granulosus (Hydatid tapeworm).